Consider the following 145-residue polypeptide: Large ribosomal subunit protein bL17 (145 aa).

Belongs to the bacterial ribosomal protein bL17 family. Part of the 50S ribosomal subunit. Contacts protein L32.

This Francisella tularensis subsp. holarctica (strain FTNF002-00 / FTA) protein is Large ribosomal subunit protein bL17.